The sequence spans 196 residues: Imidazole glycerol phosphate synthase subunit HisH (196 aa).

One can recognise a Glutamine amidotransferase type-1 domain in the interval 2-196; that stretch reads KVVILDTGCA…AQLLKNFLEM (195 aa). Catalysis depends on Cys-77, which acts as the Nucleophile. Active-site residues include His-178 and Glu-180.

Heterodimer of HisH and HisF.

Its subcellular location is the cytoplasm. The catalysed reaction is 5-[(5-phospho-1-deoxy-D-ribulos-1-ylimino)methylamino]-1-(5-phospho-beta-D-ribosyl)imidazole-4-carboxamide + L-glutamine = D-erythro-1-(imidazol-4-yl)glycerol 3-phosphate + 5-amino-1-(5-phospho-beta-D-ribosyl)imidazole-4-carboxamide + L-glutamate + H(+). The enzyme catalyses L-glutamine + H2O = L-glutamate + NH4(+). Its pathway is amino-acid biosynthesis; L-histidine biosynthesis; L-histidine from 5-phospho-alpha-D-ribose 1-diphosphate: step 5/9. In terms of biological role, IGPS catalyzes the conversion of PRFAR and glutamine to IGP, AICAR and glutamate. The HisH subunit catalyzes the hydrolysis of glutamine to glutamate and ammonia as part of the synthesis of IGP and AICAR. The resulting ammonia molecule is channeled to the active site of HisF. The sequence is that of Imidazole glycerol phosphate synthase subunit HisH from Pectobacterium atrosepticum (strain SCRI 1043 / ATCC BAA-672) (Erwinia carotovora subsp. atroseptica).